Here is a 216-residue protein sequence, read N- to C-terminus: Hexitol phosphatase A (216 aa).

Residue Asp9 is the Nucleophile of the active site. A divalent metal cation-binding residues include Asp9 and Asp11. Residues 9 to 11 (DLD), 106 to 107 (TS), and Lys138 contribute to the substrate site. The active-site Proton donor is Asp11. Residue Asp163 participates in a divalent metal cation binding.

It belongs to the HAD-like hydrolase superfamily. CbbY/CbbZ/Gph/YieH family. It depends on Mg(2+) as a cofactor. Mn(2+) is required as a cofactor. Co(2+) serves as cofactor.

It carries out the reaction sugar phosphate + H2O = sugar + phosphate.. It catalyses the reaction D-mannitol 1-phosphate + H2O = D-mannitol + phosphate. The enzyme catalyses D-sorbitol 6-phosphate + H2O = D-sorbitol + phosphate. Functionally, sugar-phosphate phosphohydrolase that appears to contribute to butanol tolerance. Catalyzes the dephosphorylation of D-mannitol 1-phosphate and D-sorbitol 6-phosphate. Is also able to dephosphorylate other sugar phosphates in vitro including ribose-5-phosphate (Rib5P), 2-deoxyribose-5-phosphate, fructose-1-phosphate (Fru1P), fructose-6-phosphate (Fru6P), and glucose-6-phosphate (Glu6P). Selectively hydrolyzes beta-D-glucose-1-phosphate (bGlu1P) and has no activity with the alpha form. This Escherichia coli (strain K12) protein is Hexitol phosphatase A.